The following is a 371-amino-acid chain: Macrolide export protein MacA (371 aa).

Over 1–10 (MKKRKTVKKR) the chain is Cytoplasmic. Residues 11–31 (YVIALVIVIAGLITLWRILNA) traverse the membrane as a helical segment. The Periplasmic portion of the chain corresponds to 32–371 (PVPTYQTLIV…IGEAKPGAAQ (340 aa)). Residues 92-137 (IDPEQAENQIKEVEATLMELRAQRQQAEAELKLARVTYSRQQRLAQ) adopt a coiled-coil conformation.

It belongs to the membrane fusion protein (MFP) (TC 8.A.1) family. In terms of assembly, homohexamer. Part of the tripartite efflux system MacAB-TolC, which is composed of an inner membrane transporter, MacB, a periplasmic membrane fusion protein, MacA, and an outer membrane component, TolC. The complex forms a large protein conduit and can translocate molecules across both the inner and outer membranes. MacA interacts with MacB and TolC.

Its subcellular location is the cell inner membrane. Its function is as follows. Part of the tripartite efflux system MacAB-TolC. MacA stimulates the ATPase activity of MacB by promoting the closed ATP-bound state of MacB, increases the capacity of MacB to bind macrolides such as erythromycin, and provides a physical link between MacB and TolC. Confers resistance against macrolides. This Escherichia coli O157:H7 protein is Macrolide export protein MacA (macA).